The sequence spans 626 residues: Ankyrin repeat domain-containing protein 55 (626 aa).

9 ANK repeats span residues 25–54 (VDLAMVYQAASNGDVNSLTSVIREDPSILE), 59–88 (EGCTPLMHAVSGRQVDTVKLLLKMGANINT), 92–124 (YGRTSLCLATYLGWLEGCVSLLRNGAKHNIPDK), 125–156 (NGRLPLHAATAEPDVRLLIVLLQQSSLSEINH), 160–189 (EGMTPLHWAAFHNRPQHTQMLLKKGADPTL), 193–222 (DFKTALHWAVQSGNRILCSIILSHRQGPSI), 229–259 (SGKTCVHIAAASGFGDIINDLAKVPECNLQA), 263–292 (DDRTPLHWAAASGKAECVQSLLDLGMDSNL), and 296–325 (NESTPLAYALYCGHTACVRLLSREGRAEPA). The segment covering 354 to 372 (KEEQKAHQKDQSRARPKEE) has biased composition (basic and acidic residues). Disordered stretches follow at residues 354 to 377 (KEEQKAHQKDQSRARPKEEETSEV), 455 to 491 (HAGLNAGPQHTAQRSQKSRSEQDLLNNRTGCPVSLEN), and 522 to 626 (QPGH…HDEN). Phosphoserine is present on Ser474. Over residues 604-614 (QRGHDPPRAEE) the composition is skewed to basic and acidic residues. Polar residues predominate over residues 616-626 (GGSSSPTHDEN).

This is Ankyrin repeat domain-containing protein 55 (Ankrd55) from Mus musculus (Mouse).